We begin with the raw amino-acid sequence, 688 residues long: Lipase (688 aa).

An N-terminal signal peptide occupies residues M1–A35. Residues G31–N309 form a disordered region. Residues A36–A302 constitute a propeptide, removed in mature form. The segment covering V45–G54 has biased composition (polar residues). Over residues N68–S79 the composition is skewed to low complexity. Composition is skewed to basic and acidic residues over residues E84–D95, S103–K117, and H126–S143. Residues E144–A172 are compositionally biased toward polar residues. Residues K173–S183 show a composition bias toward basic and acidic residues. The span at K184–E211 shows a compositional bias: polar residues. Residues S240–S267 are compositionally biased toward basic and acidic residues. Residues L274–Q289 show a composition bias toward polar residues. The active-site Nucleophile is the S418. Residue D609 is the Charge relay system of the active site. D647 is a Ca(2+) binding site. Residue H648 is the Charge relay system of the active site. Ca(2+) is bound by residues D650, D655, and D658.

This sequence belongs to the AB hydrolase superfamily. Lipase family.

The protein resides in the secreted. The enzyme catalyses a triacylglycerol + H2O = a diacylglycerol + a fatty acid + H(+). This is Lipase (lip) from Staphylococcus epidermidis.